Reading from the N-terminus, the 183-residue chain is Ubiquitin-conjugating enzyme E2-21 kDa (183 aa).

In terms of domain architecture, UBC core spans 17–179 (TCMSRIVKEY…VKYFLAERER (163 aa)). Cysteine 115 serves as the catalytic Glycyl thioester intermediate.

Belongs to the ubiquitin-conjugating enzyme family.

The protein localises to the peroxisome. The enzyme catalyses S-ubiquitinyl-[E1 ubiquitin-activating enzyme]-L-cysteine + [E2 ubiquitin-conjugating enzyme]-L-cysteine = [E1 ubiquitin-activating enzyme]-L-cysteine + S-ubiquitinyl-[E2 ubiquitin-conjugating enzyme]-L-cysteine.. The protein operates within protein modification; protein ubiquitination. Its function is as follows. Catalyzes the covalent attachment of ubiquitin to other proteins. Essential for peroxisome biogenesis. Required for UBC4-independent ubiquitination of PEX5. The protein is Ubiquitin-conjugating enzyme E2-21 kDa (PEX4) of Saccharomyces cerevisiae (strain ATCC 204508 / S288c) (Baker's yeast).